The chain runs to 272 residues: Nitrogenase iron protein (272 aa).

8–15 (GKGGIGKS) serves as a coordination point for ATP. Position 94 (cysteine 94) interacts with [4Fe-4S] cluster. The residue at position 97 (arginine 97) is an ADP-ribosylarginine; by dinitrogenase reductase ADP-ribosyltransferase. A [4Fe-4S] cluster-binding site is contributed by cysteine 129.

The protein belongs to the NifH/BchL/ChlL family. Homodimer. Requires [4Fe-4S] cluster as cofactor. The reversible ADP-ribosylation of Arg-97 inactivates the nitrogenase reductase and regulates nitrogenase activity.

The enzyme catalyses N2 + 8 reduced [2Fe-2S]-[ferredoxin] + 16 ATP + 16 H2O = H2 + 8 oxidized [2Fe-2S]-[ferredoxin] + 2 NH4(+) + 16 ADP + 16 phosphate + 6 H(+). Functionally, the key enzymatic reactions in nitrogen fixation are catalyzed by the nitrogenase complex, which has 2 components: the iron protein and the molybdenum-iron protein. The polypeptide is Nitrogenase iron protein (Desulforamulus reducens (strain ATCC BAA-1160 / DSM 100696 / MI-1) (Desulfotomaculum reducens)).